Consider the following 185-residue polypeptide: Large ribosomal subunit protein uL5 (185 aa).

Belongs to the universal ribosomal protein uL5 family. In terms of assembly, part of the 50S ribosomal subunit; part of the 5S rRNA/L5/L18/L25 subcomplex. Contacts the 5S rRNA and the P site tRNA. Forms a bridge to the 30S subunit in the 70S ribosome.

Functionally, this is one of the proteins that bind and probably mediate the attachment of the 5S RNA into the large ribosomal subunit, where it forms part of the central protuberance. In the 70S ribosome it contacts protein S13 of the 30S subunit (bridge B1b), connecting the 2 subunits; this bridge is implicated in subunit movement. Contacts the P site tRNA; the 5S rRNA and some of its associated proteins might help stabilize positioning of ribosome-bound tRNAs. The polypeptide is Large ribosomal subunit protein uL5 (Afipia carboxidovorans (strain ATCC 49405 / DSM 1227 / KCTC 32145 / OM5) (Oligotropha carboxidovorans)).